A 218-amino-acid chain; its full sequence is DNA endonuclease I-ChuI (218 aa).

This sequence belongs to the LAGLIDADG endonuclease family.

It is found in the plastid. The protein localises to the chloroplast. In terms of biological role, probable endonuclease involved in intron homing. Encoded in the group-I intron of the subunit rRNA-encoding gene (rrnL), it generates a staggered cut with 4-nt (CTCG) 3'-OH overhangs 2 bp downstream from the intron insertion site. In Chlamydomonas applanata (Chlamydomonas humicola), this protein is DNA endonuclease I-ChuI.